A 503-amino-acid chain; its full sequence is Glutamate--tRNA ligase (503 aa).

The 'HIGH' region signature appears at Pro-12 to Gly-22. Residues Lys-259–Arg-263 carry the 'KMSKS' region motif. Lys-262 is an ATP binding site.

This sequence belongs to the class-I aminoacyl-tRNA synthetase family. Glutamate--tRNA ligase type 1 subfamily. Monomer.

Its subcellular location is the cytoplasm. The enzyme catalyses tRNA(Glu) + L-glutamate + ATP = L-glutamyl-tRNA(Glu) + AMP + diphosphate. Catalyzes the attachment of glutamate to tRNA(Glu) in a two-step reaction: glutamate is first activated by ATP to form Glu-AMP and then transferred to the acceptor end of tRNA(Glu). The protein is Glutamate--tRNA ligase of Chlorobaculum parvum (strain DSM 263 / NCIMB 8327) (Chlorobium vibrioforme subsp. thiosulfatophilum).